A 458-amino-acid chain; its full sequence is Morphogenetic regulator of filamentous growth protein 1 (458 aa).

The disordered stretch occupies residues 401-458; it reads KKDSGSEPLHAKRRRNSGISPRTTTLGPNGNSNTSNEELPTSDVNDINKDMTKKKMKF. Residues 417–445 show a composition bias toward polar residues; the sequence is SGISPRTTTLGPNGNSNTSNEELPTSDVN. The span at 446–458 shows a compositional bias: basic and acidic residues; that stretch reads DINKDMTKKKMKF.

It belongs to the MFG1 family. Interacts with FLO8 and MSS11, both morphogenetic transcription factors binding directly to the FLO11 promoter.

It is found in the nucleus. Its function is as follows. Transcriptional regulator with a general role in all morphogenetically distinct forms of filamentous growth, namely haploid invasive growth, biofilm formation, and diploid pseudohyphal growth. May control FLO11 gene expression as part of a promoter-bound complex with FLO8 and MSS1. This Saccharomyces cerevisiae (strain ATCC 204508 / S288c) (Baker's yeast) protein is Morphogenetic regulator of filamentous growth protein 1 (MFG1).